The following is a 700-amino-acid chain: Dymeclin (700 aa).

Gly2 carries N-myristoyl glycine lipidation. Ser347 carries the phosphoserine modification.

Belongs to the dymeclin family.

The polypeptide is Dymeclin (Drosophila pseudoobscura pseudoobscura (Fruit fly)).